The following is a 927-amino-acid chain: DNA mismatch repair protein MutS (927 aa).

646–653 is an ATP binding site; the sequence is GPNMAGKS. Residues 904–927 are disordered; it reads SAQPGSAEQGESPDKHDEGKNSRG. Over residues 915–927 the composition is skewed to basic and acidic residues; sequence SPDKHDEGKNSRG.

Belongs to the DNA mismatch repair MutS family.

Its function is as follows. This protein is involved in the repair of mismatches in DNA. It is possible that it carries out the mismatch recognition step. This protein has a weak ATPase activity. This chain is DNA mismatch repair protein MutS, found in Desulfovibrio desulfuricans (strain ATCC 27774 / DSM 6949 / MB).